We begin with the raw amino-acid sequence, 249 residues long: MTSKRIIPCLDVKDGRVVKGVNFLNLVDKGDPVELAARYEEEGADEIVFLDITATIEGRKTMMNVVKDTASVISIPLTVGGGIRSLDDVSKILGNGADKVSINTAAVENKDLVSISSAEFGSQAIVVAIDVKRIGNDYYVFTRSGKYNTGINAISWAKEVEKLGAGEILLTSIDRDGTREGYDIEITELISKSVNIPIIASGGAGKIDDFLGILKVADAALAAGVFHDGVIRIMDLKKYLGKNGVEVRM.

Catalysis depends on residues Asp11 and Asp130.

Belongs to the HisA/HisF family. In terms of assembly, heterodimer of HisH and HisF.

The protein resides in the cytoplasm. It carries out the reaction 5-[(5-phospho-1-deoxy-D-ribulos-1-ylimino)methylamino]-1-(5-phospho-beta-D-ribosyl)imidazole-4-carboxamide + L-glutamine = D-erythro-1-(imidazol-4-yl)glycerol 3-phosphate + 5-amino-1-(5-phospho-beta-D-ribosyl)imidazole-4-carboxamide + L-glutamate + H(+). Its pathway is amino-acid biosynthesis; L-histidine biosynthesis; L-histidine from 5-phospho-alpha-D-ribose 1-diphosphate: step 5/9. Its function is as follows. IGPS catalyzes the conversion of PRFAR and glutamine to IGP, AICAR and glutamate. The HisF subunit catalyzes the cyclization activity that produces IGP and AICAR from PRFAR using the ammonia provided by the HisH subunit. This chain is Imidazole glycerol phosphate synthase subunit HisF, found in Sulfolobus acidocaldarius (strain ATCC 33909 / DSM 639 / JCM 8929 / NBRC 15157 / NCIMB 11770).